The primary structure comprises 887 residues: METKSSYLKFLNEEQRISVQSPHKYTQILAGPGSGKTRVLTARVAYLLQKNHIAAEDLIIATFTNKAANEIKLRIEAILGNSEASKLISGTFHSIAYKYLVKYGKHIGLSSNWLIADRNDTQAIMKRLLDSLKKAKNPIASGIRGQELTPQNALNRITKLKSNGLLVKPGMDQLSLINGLEEPPKELQSHQSVELYRLYQTSLWKNNLADFDDLLLNFILLLQKQPDCVRNIKHILIDEFQDTSKIQYFLVKLLALQNSDITIVGDPDQSIYGFRSAEIRNLNQMSEDFEGTQVLHLERNYRSAKPILELALSIISQDKSRPKKGLKSNHISSLKPHYRLFETNNKESYWIAREIKRIVGSCPELIFYNDIAILVRSSSLTRSLEHALSELGVPYRMVGVNKFFDREEIRDLIAYLRVLANKDSTSLIRVINVPPRNIGKTKIDRIIFESERRGLTFWQTLNEVKNENILLSQRNDKSFLKSLKSFLCSISKLENRYLSNGHSATLSDLLLGILSEIKYYEYLVRKNKETVEEKWENVMELVQQSDNISCIFYELDYKISTIVLLQNFLTQIALVNEEQKEGESQKVTISTLHAAKGLEWPVVFLPCLCENIIPHSRSDDLDEERRLLYVGATRAQALLYLSSFKSVTGMFADMQNSDNVQDVSPFLKGEEMKRWVMESEIVFNEKIASEIGTILGRKSYGKITNLSGIGSNANHNGTKFENLGFQCCRVLAEAELKKRERVKSVNDYNKDETNFRKHNAKRSKTDIRSWFEKKQPIDSDVEISEPSRSASIMVANKDLNDRSFETVNRIVSTRASTTNASFMSSVRQNLGRGPSTKDQVINRTLREGHQDVVQHTDLNQSNTKVASARPAGSRKRLGVRLRVSRML.

The region spanning 9–304 (KFLNEEQRIS…LHLERNYRSA (296 aa)) is the UvrD-like helicase ATP-binding domain. Residues 33 to 38 (GSGKTR) and Arg-302 each bind ATP. Positions 305–597 (KPILELALSI…TISTLHAAKG (293 aa)) constitute a UvrD-like helicase C-terminal domain.

It belongs to the helicase family. UvrD subfamily.

It is found in the nucleus. The enzyme catalyses Couples ATP hydrolysis with the unwinding of duplex DNA by translocating in the 3'-5' direction.. The catalysed reaction is ATP + H2O = ADP + phosphate + H(+). In terms of biological role, ATP-dependent DNA helicase involved in DNA repair at least for UV-induced lesions. Also aids the recombinational repair of camptothecin-induced collapsed replication forks. In Schizosaccharomyces pombe (strain 972 / ATCC 24843) (Fission yeast), this protein is ATP-dependent DNA helicase srs2 (srs2).